Here is a 436-residue protein sequence, read N- to C-terminus: Bifunctional protein GlmU (436 aa).

The interval 1 to 225 is pyrophosphorylase; that stretch reads MNNNTSIIIL…EQNFMGINDK (225 aa). Residues 10–13, Lys24, Gln76, and 83–84 contribute to the UDP-N-acetyl-alpha-D-glucosamine site; these read LAAG and GT. Asp104 lines the Mg(2+) pocket. Residues Gly137, Glu151, Asn166, and Asn223 each contribute to the UDP-N-acetyl-alpha-D-glucosamine site. Asn223 serves as a coordination point for Mg(2+). A linker region spans residues 226 to 246; the sequence is FQLSIAEKIMQDEIKQNLMKA. An N-acetyltransferase region spans residues 247 to 436; it reads GVLMRMPESI…KFFGKDDVKK (190 aa). Residues Arg310 and Lys327 each coordinate UDP-N-acetyl-alpha-D-glucosamine. The active-site Proton acceptor is His338. Residues Tyr341 and Asn352 each contribute to the UDP-N-acetyl-alpha-D-glucosamine site. Residues 361 to 362, Ser380, Ala398, and Arg415 contribute to the acetyl-CoA site; that span reads NY.

This sequence in the N-terminal section; belongs to the N-acetylglucosamine-1-phosphate uridyltransferase family. It in the C-terminal section; belongs to the transferase hexapeptide repeat family. As to quaternary structure, homotrimer. The cofactor is Mg(2+).

It is found in the cytoplasm. The enzyme catalyses alpha-D-glucosamine 1-phosphate + acetyl-CoA = N-acetyl-alpha-D-glucosamine 1-phosphate + CoA + H(+). It catalyses the reaction N-acetyl-alpha-D-glucosamine 1-phosphate + UTP + H(+) = UDP-N-acetyl-alpha-D-glucosamine + diphosphate. It participates in nucleotide-sugar biosynthesis; UDP-N-acetyl-alpha-D-glucosamine biosynthesis; N-acetyl-alpha-D-glucosamine 1-phosphate from alpha-D-glucosamine 6-phosphate (route II): step 2/2. It functions in the pathway nucleotide-sugar biosynthesis; UDP-N-acetyl-alpha-D-glucosamine biosynthesis; UDP-N-acetyl-alpha-D-glucosamine from N-acetyl-alpha-D-glucosamine 1-phosphate: step 1/1. Its pathway is bacterial outer membrane biogenesis; LPS lipid A biosynthesis. Its function is as follows. Catalyzes the last two sequential reactions in the de novo biosynthetic pathway for UDP-N-acetylglucosamine (UDP-GlcNAc). The C-terminal domain catalyzes the transfer of acetyl group from acetyl coenzyme A to glucosamine-1-phosphate (GlcN-1-P) to produce N-acetylglucosamine-1-phosphate (GlcNAc-1-P), which is converted into UDP-GlcNAc by the transfer of uridine 5-monophosphate (from uridine 5-triphosphate), a reaction catalyzed by the N-terminal domain. The polypeptide is Bifunctional protein GlmU (Campylobacter concisus (strain 13826)).